We begin with the raw amino-acid sequence, 145 residues long: Photosystem I reaction center subunit XI (145 aa).

3 consecutive transmembrane segments (helical) span residues Leu-48–Leu-68, Leu-75–Ile-95, and Ile-125–Ala-145.

The protein belongs to the PsaL family.

The protein localises to the plastid. The protein resides in the chloroplast thylakoid membrane. This chain is Photosystem I reaction center subunit XI, found in Emiliania huxleyi (Coccolithophore).